Reading from the N-terminus, the 459-residue chain is GTPase Der (459 aa).

EngA-type G domains follow at residues 3–169 (PLVA…PPKE) and 183–358 (IRLA…DQFR). GTP is bound by residues 9 to 16 (GRPNVGKS), 56 to 60 (DTGGF), 119 to 122 (NKLD), 189 to 196 (GRPNVGKS), 236 to 240 (DTAGI), and 301 to 304 (NKWD). Residues 359–442 (FRAPTPQLNR…PIRLIFKGRP (84 aa)) form the KH-like domain.

The protein belongs to the TRAFAC class TrmE-Era-EngA-EngB-Septin-like GTPase superfamily. EngA (Der) GTPase family. In terms of assembly, associates with the 50S ribosomal subunit.

Functionally, GTPase that plays an essential role in the late steps of ribosome biogenesis. The polypeptide is GTPase Der (Myxococcus xanthus (strain DK1622)).